An 89-amino-acid polypeptide reads, in one-letter code: Mu-theraphotoxin-Phlo1a (89 aa).

The N-terminal stretch at 1–22 (MKVSVLITLAVLGVMFVWTSAA) is a signal peptide. Positions 23-52 (EQEDHGSDRRDSPALLKNLLGEEVFQSEER) are excised as a propeptide. Cystine bridges form between cysteine 54–cysteine 68, cysteine 61–cysteine 73, and cysteine 67–cysteine 81. An Isoleucine amide modification is found at isoleucine 87.

Belongs to the neurotoxin 10 (Hwtx-1) family. 39 (Jztx-34) subfamily. In terms of tissue distribution, expressed by the venom gland.

Its subcellular location is the secreted. Its function is as follows. Gating-modifier toxin that inhibits voltage-gated sodium channel Nav by shifting the threshold for channel activation to more positive potentials. This toxin moderately inhibits human Nav1.7/SCN9A (IC(50)=459 nM) and weakly inhibits hNav1.2/SCN2A and hNav1.5/SCN5A (&lt;20% inhibition at 1 uM peptide). Inhibition of Nav1.7 is voltage-dependent, with lower inhibition at more positive test pulses. This Phlogius sp. (Tarantula spider) protein is Mu-theraphotoxin-Phlo1a.